Here is a 221-residue protein sequence, read N- to C-terminus: Putative hemin import ATP-binding protein HrtA (221 aa).

The region spanning 3-221 (LVVKDIVKNF…IELEDGKITD (219 aa)) is the ABC transporter domain. Residue 39–46 (GASGSGKT) participates in ATP binding.

The protein belongs to the ABC transporter superfamily. HrtA family. As to quaternary structure, the complex is composed of two ATP-binding proteins (HrtA), two transmembrane proteins (HrtB) and a solute-binding protein.

The protein localises to the cell membrane. Part of the ABC transporter complex hrt involved in hemin import. Responsible for energy coupling to the transport system. This is Putative hemin import ATP-binding protein HrtA (hrtA) from Staphylococcus aureus (strain Mu50 / ATCC 700699).